We begin with the raw amino-acid sequence, 619 residues long: Phosphoenolpyruvate carboxykinase [GTP] (619 aa).

Residues R81 and 230-232 (YGG) contribute to the substrate site. Residues K239 and H259 each coordinate Mn(2+). S281 is a binding site for substrate. 282 to 287 (ACGKTN) contacts GTP. The active site involves C283. D306 contributes to the Mn(2+) binding site. 399–401 (NSR) is a binding site for substrate. GTP contacts are provided by residues R401, R432, and 525-528 (YGQN).

The protein belongs to the phosphoenolpyruvate carboxykinase [GTP] family. Monomer. Requires Mn(2+) as cofactor.

The catalysed reaction is oxaloacetate + GTP = phosphoenolpyruvate + GDP + CO2. Its function is as follows. In parasitic nematodes PEPCK carboxylates phosphoenolpyruvate to oxaloacetate thus introducing the products of glycolysis to mitochondrial metabolism. Functionally, catalyzes the conversion of oxaloacetate (OAA) to phosphoenolpyruvate (PEP), the rate-limiting step in the metabolic pathway that produces glucose from lactate and other precursors derived from the citric acid cycle. This chain is Phosphoenolpyruvate carboxykinase [GTP] (PEPCK), found in Haemonchus contortus (Barber pole worm).